Reading from the N-terminus, the 174-residue chain is NADH-ubiquinone oxidoreductase chain 6 (174 aa).

The next 6 helical transmembrane spans lie at 1–21, 24–44, 47–67, 86–106, 111–131, and 151–171; these read MTYA…GFSS, SPIY…AVIL, GGGY…MVVF, AEVL…VLWV, GVVV…EGEG, and WLVV…IEIA.

This sequence belongs to the complex I subunit 6 family. As to quaternary structure, core subunit of respiratory chain NADH dehydrogenase (Complex I) which is composed of 45 different subunits.

It localises to the mitochondrion inner membrane. The catalysed reaction is a ubiquinone + NADH + 5 H(+)(in) = a ubiquinol + NAD(+) + 4 H(+)(out). In terms of biological role, core subunit of the mitochondrial membrane respiratory chain NADH dehydrogenase (Complex I) which catalyzes electron transfer from NADH through the respiratory chain, using ubiquinone as an electron acceptor. Essential for the catalytic activity and assembly of complex I. This Pongo pygmaeus (Bornean orangutan) protein is NADH-ubiquinone oxidoreductase chain 6 (MT-ND6).